A 274-amino-acid chain; its full sequence is NADH-ubiquinone oxidoreductase chain 2 (274 aa).

The next 8 membrane-spanning stretches (helical) occupy residues 28 to 48 (MIIM…FWFP), 54 to 74 (LTWM…LMLI), 79 to 99 (IKYL…IGGL), 107 to 127 (LMAF…MISE), 128 to 148 (SIWL…TFMF), 171 to 191 (FTLF…GFLP), 206 to 226 (FLLL…LRIC), and 254 to 274 (LIMT…YFMF).

The protein belongs to the complex I subunit 2 family.

It is found in the mitochondrion inner membrane. The enzyme catalyses a ubiquinone + NADH + 5 H(+)(in) = a ubiquinol + NAD(+) + 4 H(+)(out). Its function is as follows. Core subunit of the mitochondrial membrane respiratory chain NADH dehydrogenase (Complex I) that is believed to belong to the minimal assembly required for catalysis. Complex I functions in the transfer of electrons from NADH to the respiratory chain. The immediate electron acceptor for the enzyme is believed to be ubiquinone. In Drosophila mauritiana (Fruit fly), this protein is NADH-ubiquinone oxidoreductase chain 2 (mt:ND2).